A 160-amino-acid polypeptide reads, in one-letter code: UPF0178 protein BPP1051 (160 aa).

Belongs to the UPF0178 family.

The chain is UPF0178 protein BPP1051 from Bordetella parapertussis (strain 12822 / ATCC BAA-587 / NCTC 13253).